A 2179-amino-acid polypeptide reads, in one-letter code: Probable inactive serine/threonine-protein kinase lvsG (2179 aa).

The interval 100–167 (DHDLNKNKNN…TSISLNDLNS (68 aa)) is disordered. 2 stretches are compositionally biased toward low complexity: residues 106–121 (NKNN…NNSG) and 141–159 (LSPS…LSTS). The WD 1 repeat unit spans residues 216–256 (LYERSLKTSQQQQQQQQQQFKFQPNETLSLWEYFDEINSPP). Disordered stretches follow at residues 281–300 (LDNK…NSQS), 523–556 (DNDN…TVGW), 589–621 (DSMG…NSGK), 778–801 (KSLK…QPQF), 844–959 (NNHH…NKPS), 1033–1055 (AQQQ…SKQL), 1079–1153 (GISK…STTD), 1339–1362 (NHSN…KNGS), and 1785–1807 (TTTT…PNSL). One can recognise a BEACH domain in the interval 463 to 801 (YHQPLENQFE…QQQTQQQPQF (339 aa)). A compositionally biased stretch (low complexity) spans 534–548 (NSSSSNNNNNNNNED). Residues 590-602 (SMGGGIGSIGSTG) are compositionally biased toward gly residues. 4 stretches are compositionally biased toward low complexity: residues 783 to 800 (QRQQ…QQPQ), 853 to 943 (NSNI…GVNN), 1033 to 1047 (AQQQ…QQQA), and 1084 to 1098 (TTNA…TNSN). The stretch at 1021–1049 (LQQQLQQQQQQQAQQQQSQQQSQQQQANS) forms a coiled coil. The 337-residue stretch at 1064-1400 (ESMIKKYSNG…VNELLSSSLF (337 aa)) folds into the Protein kinase domain. Residues 1099–1122 (MGDSIGNNITSPPSPTSLKDSSSI) are compositionally biased toward polar residues. The segment covering 1123–1134 (QQQQQQQQQQQQ) has biased composition (low complexity). The segment covering 1135–1153 (NSESTRPITPPNVSNSTTD) has biased composition (polar residues). Low complexity-rich tracts occupy residues 1339–1360 (NHSN…NNKN) and 1785–1801 (TTTT…NNNN). WD repeat units follow at residues 1864–1903 (EHNA…SLTT), 1906–1942 (QHMH…KVNV), 1945–1983 (EPTG…LTHE), 2007–2048 (SNSN…ILEQ), 2052–2089 (HHDS…PIIS), and 2149–2179 (PKQS…KICQ).

Belongs to the protein kinase superfamily. Ser/Thr protein kinase family.

The polypeptide is Probable inactive serine/threonine-protein kinase lvsG (lvsG) (Dictyostelium discoideum (Social amoeba)).